We begin with the raw amino-acid sequence, 87 residues long: MAWVHGRVQGVGFRYTTQHEATRLGLTGYARNLDDGSVEVLACGEAEQVEKLIAWLKAGGPRSAHVEKVLTEPHSPTEDYQDFRIRY.

One can recognise an Acylphosphatase-like domain in the interval 1-87 (MAWVHGRVQG…EDYQDFRIRY (87 aa)). Active-site residues include Arg-14 and Asn-32.

This sequence belongs to the acylphosphatase family.

The enzyme catalyses an acyl phosphate + H2O = a carboxylate + phosphate + H(+). The polypeptide is Acylphosphatase (acyP) (Cronobacter sakazakii (strain ATCC BAA-894) (Enterobacter sakazakii)).